The following is a 498-amino-acid chain: ATP synthase subunit beta, chloroplastic (498 aa).

Thr6 carries the phosphothreonine modification. Ser13 bears the Phosphoserine mark. 172 to 179 (GGAGVGKT) is a binding site for ATP.

The protein belongs to the ATPase alpha/beta chains family. As to quaternary structure, F-type ATPases have 2 components, CF(1) - the catalytic core - and CF(0) - the membrane proton channel. CF(1) has five subunits: alpha(3), beta(3), gamma(1), delta(1), epsilon(1). CF(0) has four main subunits: a(1), b(1), b'(1) and c(9-12).

The protein localises to the plastid. The protein resides in the chloroplast thylakoid membrane. It carries out the reaction ATP + H2O + 4 H(+)(in) = ADP + phosphate + 5 H(+)(out). Functionally, produces ATP from ADP in the presence of a proton gradient across the membrane. The catalytic sites are hosted primarily by the beta subunits. This is ATP synthase subunit beta, chloroplastic from Raphanus sativus (Radish).